The chain runs to 712 residues: Sterol uptake control protein 2 (712 aa).

Residues 1-19 show a composition bias toward polar residues; sequence MMMTVKQESPNSTLNTSEF. Residues 1 to 52 are disordered; it reads MMMTVKQESPNSTLNTSEFSSDENLKTNNSEPPKKVSKSSTGKRKYHQKSRN. The segment covering 35–50 has biased composition (basic residues); that stretch reads KVSKSSTGKRKYHQKS. A DNA-binding region (zn(2)-C6 fungal-type) is located at residues 54–81; it reads CSTCKKRRVKCDEQRPVCGNCTKLKLDC. 2 disordered regions span residues 95–150 and 236–342; these read KKDI…VIPP and TTVP…ANPL. Polar residues-rich tracts occupy residues 113–143, 252–306, and 326–337; these read STVS…QDIK, RKSQ…SGSP, and KSLPNISPNMSI.

The protein resides in the nucleus. Functionally, transcription factor involved in the regulation of ergosterol biosynthetic genes such as ERG2 and ERG11 through direct binding to sterol response elements (SREs) in the promoters. Also binds to its own promoter on 2 cis-acting elements to promote autoregulation. Regulates sterol uptake across the plasma membrane. Acts as a major regulator of ascorbic acid-induced response. Plays a role in the triggering of pyroptosis, an inflammasome-mediated programmed cell death pathway in macrophages, allowing macrophages escaping. The protein is Sterol uptake control protein 2 of Candida albicans (strain SC5314 / ATCC MYA-2876) (Yeast).